The following is a 1113-amino-acid chain: Protein translocase subunit SecA (1113 aa).

Residues Q175, 193-197 (GEGKT), and D694 contribute to the ATP site. The span at 1042–1072 (RHAAEQRTDMSKYRTQKDDIEAQQKAQRDAA) shows a compositional bias: basic and acidic residues. The interval 1042-1113 (RHAAEQRTDM…KFKQCHGRNL (72 aa)) is disordered. Positions 1097, 1099, 1108, and 1109 each coordinate Zn(2+). The segment covering 1103-1113 (KKFKQCHGRNL) has biased composition (basic residues).

Belongs to the SecA family. In terms of assembly, monomer and homodimer. Part of the essential Sec protein translocation apparatus which comprises SecA, SecYEG and auxiliary proteins SecDF. Other proteins may also be involved. Zn(2+) serves as cofactor.

Its subcellular location is the cell inner membrane. The protein resides in the cytoplasm. The catalysed reaction is ATP + H2O + cellular proteinSide 1 = ADP + phosphate + cellular proteinSide 2.. Part of the Sec protein translocase complex. Interacts with the SecYEG preprotein conducting channel. Has a central role in coupling the hydrolysis of ATP to the transfer of proteins into and across the cell membrane, serving as an ATP-driven molecular motor driving the stepwise translocation of polypeptide chains across the membrane. The protein is Protein translocase subunit SecA of Porphyromonas gingivalis (strain ATCC 33277 / DSM 20709 / CIP 103683 / JCM 12257 / NCTC 11834 / 2561).